Reading from the N-terminus, the 258-residue chain is 5'-nucleotidase SurE (258 aa).

4 residues coordinate a divalent metal cation: Asp-9, Asp-10, Ser-42, and Asn-96.

Belongs to the SurE nucleotidase family. It depends on a divalent metal cation as a cofactor.

The protein localises to the cytoplasm. It carries out the reaction a ribonucleoside 5'-phosphate + H2O = a ribonucleoside + phosphate. In terms of biological role, nucleotidase that shows phosphatase activity on nucleoside 5'-monophosphates. The chain is 5'-nucleotidase SurE from Campylobacter jejuni subsp. jejuni serotype O:23/36 (strain 81-176).